Consider the following 383-residue polypeptide: Probable aspartate/prephenate aminotransferase (383 aa).

Residues Gly-39, Trp-125, and Asn-175 each coordinate L-aspartate. The residue at position 234 (Lys-234) is an N6-(pyridoxal phosphate)lysine. Arg-361 is an L-aspartate binding site.

Belongs to the class-I pyridoxal-phosphate-dependent aminotransferase family. Homodimer. Pyridoxal 5'-phosphate is required as a cofactor.

It is found in the cytoplasm. The enzyme catalyses L-aspartate + 2-oxoglutarate = oxaloacetate + L-glutamate. It catalyses the reaction L-arogenate + oxaloacetate = prephenate + L-aspartate. Its function is as follows. Catalyzes the reversible conversion of aspartate and 2-oxoglutarate to glutamate and oxaloacetate. Can also transaminate prephenate in the presence of aspartate. This is Probable aspartate/prephenate aminotransferase (aspC) from Thermus aquaticus.